The primary structure comprises 328 residues: Transcription initiation factor TFIID subunit 8 (328 aa).

Residues 16–83 (RRILNKVVSQ…DVSLALINMG (68 aa)) enclose the Histone-fold domain. Residues 229-309 (NRTEDEPSKD…PGTMPSRSLA (81 aa)) form a disordered region. Phosphoserine is present on residues serine 236, serine 245, and serine 255. The span at 239-251 (DGEEGDSENEEMD) shows a compositional bias: acidic residues. The span at 252 to 264 (GDKSKEEKPELDI) shows a compositional bias: basic and acidic residues. Residues 296-309 (NCPTPGTMPSRSLA) show a composition bias toward polar residues.

Belongs to the TAF8 family. As to quaternary structure, belongs to the TFIID complex which is composed of TATA binding protein (Tbp) and a number of TBP-associated factors (TAFs). Histone fold interacts with N-terminus of Taf10b.

The protein localises to the nucleus. Its function is as follows. TFIID is a multimeric protein complex that plays a central role in mediating promoter responses to various activators and repressors. This chain is Transcription initiation factor TFIID subunit 8, found in Drosophila melanogaster (Fruit fly).